A 51-amino-acid chain; its full sequence is Insulin (51 aa).

3 disulfide bridges follow: cysteine 7/cysteine 37, cysteine 19/cysteine 50, and cysteine 36/cysteine 41.

Belongs to the insulin family. Heterodimer of a B chain and an A chain linked by two disulfide bonds.

It localises to the secreted. Its function is as follows. Insulin decreases blood glucose concentration. It increases cell permeability to monosaccharides, amino acids and fatty acids. It accelerates glycolysis, the pentose phosphate cycle, and glycogen synthesis in liver. This is Insulin (INS) from Didelphis virginiana (North American opossum).